A 305-amino-acid chain; its full sequence is Acetaldehyde dehydrogenase 5 (305 aa).

11–14 contributes to the NAD(+) binding site; the sequence is SGNI. Catalysis depends on cysteine 130, which acts as the Acyl-thioester intermediate. Residues 161–169 and asparagine 272 each bind NAD(+); that span reads SIGPGTRAN.

It belongs to the acetaldehyde dehydrogenase family.

The enzyme catalyses acetaldehyde + NAD(+) + CoA = acetyl-CoA + NADH + H(+). This chain is Acetaldehyde dehydrogenase 5, found in Dechloromonas aromatica (strain RCB).